We begin with the raw amino-acid sequence, 208 residues long: Redox-sensing transcriptional repressor Rex (208 aa).

The H-T-H motif DNA-binding region spans 15 to 54; that stretch reads SYYMCLERLLDEGVEVVSSEELARRLDLKASQIRKDLSYF. 89-94 contacts NAD(+); it reads GAGNIG.

The protein belongs to the transcriptional regulatory Rex family. As to quaternary structure, homodimer.

It localises to the cytoplasm. In terms of biological role, modulates transcription in response to changes in cellular NADH/NAD(+) redox state. The chain is Redox-sensing transcriptional repressor Rex from Thermotoga petrophila (strain ATCC BAA-488 / DSM 13995 / JCM 10881 / RKU-1).